Reading from the N-terminus, the 429-residue chain is Zinc finger protein 275 (429 aa).

Residues 31 to 95 (VSDPSPNTDP…DGKRGSPQNL (65 aa)) form a disordered region. The segment covering 34-51 (PSPNTDPAKYSESTSATR) has biased composition (polar residues). Serine 76 bears the Phosphoserine mark. Basic and acidic residues predominate over residues 79-89 (FRQHGDSDGKR). 2 C2H2-type zinc fingers span residues 101-123 (FACK…QRVH) and 129-151 (WECG…RKSH). Positions 149 to 176 (KSHVAAEPQPGPSRALENAAEKREQMER) are disordered. Residues 167–176 (AAEKREQMER) are compositionally biased toward basic and acidic residues. C2H2-type zinc fingers lie at residues 181–203 (FECE…LRVH), 209–231 (FDCE…QKLH), 237–259 (FACK…QRMH), 265–287 (FDCD…QRIH), 293–315 (YGCP…RRIH), 321–343 (YACG…ARIH), 349–371 (YACG…RRIH), 377–399 (YECD…RRIH), and 405–427 (CECS…QPTH).

Belongs to the krueppel C2H2-type zinc-finger protein family.

The protein resides in the nucleus. May be involved in transcriptional regulation. The polypeptide is Zinc finger protein 275 (ZNF275) (Homo sapiens (Human)).